The primary structure comprises 166 residues: Phosphopantetheine adenylyltransferase (166 aa).

Ser-11 contributes to the substrate binding site. Residues 11–12 (SF) and His-19 each bind ATP. Residues Lys-43, Ala-76, and Arg-90 each coordinate substrate. Residues 91–93 (GLR), Glu-101, and 126–132 (MQPISSS) contribute to the ATP site.

Belongs to the bacterial CoaD family. Homohexamer. Requires Mg(2+) as cofactor.

The protein localises to the cytoplasm. It carries out the reaction (R)-4'-phosphopantetheine + ATP + H(+) = 3'-dephospho-CoA + diphosphate. It participates in cofactor biosynthesis; coenzyme A biosynthesis; CoA from (R)-pantothenate: step 4/5. Functionally, reversibly transfers an adenylyl group from ATP to 4'-phosphopantetheine, yielding dephospho-CoA (dPCoA) and pyrophosphate. In Streptococcus uberis (strain ATCC BAA-854 / 0140J), this protein is Phosphopantetheine adenylyltransferase.